The sequence spans 211 residues: Endonuclease YncB (211 aa).

Positions 1-19 (MKKILISMIAIVLSITLAA) are cleaved as a signal peptide. A lipid anchor (N-palmitoyl cysteine) is attached at Cys20. Cys20 is lipidated: S-diacylglycerol cysteine. Residues 24–63 (HAAKNHSDSNGTEQVSQDTHSNEYNQTEQKAGTPHSKNQK) are disordered. Over residues 31–53 (DSNGTEQVSQDTHSNEYNQTEQK) the composition is skewed to polar residues. The 134-residue stretch at 64 to 197 (KLVNVTLDRA…KSDKLSIWSK (134 aa)) folds into the TNase-like domain. Asp77 is a binding site for Ca(2+). Arg91 is a catalytic residue. Residues Asp96 and Thr97 each contribute to the Ca(2+) site. Active-site residues include Glu99 and Arg142.

This sequence belongs to the thermonuclease family. The cofactor is Ca(2+).

It is found in the cell membrane. With respect to regulation, inhibited by aurintricalboxylic acid but not by Zn(2+). Shows DNase activity on double strand DNA. The polypeptide is Endonuclease YncB (yncB) (Bacillus subtilis (strain 168)).